The primary structure comprises 1114 residues: Kinesin-like protein KIN-12F (1114 aa).

The disordered stretch occupies residues 1 to 84; sequence MADNRIAGSL…RSQVSASRPR (84 aa). Polar residues-rich tracts occupy residues 10–39 and 48–80; these read LPTS…SNPD and PNIH…QVSA. The region spanning 104–436 is the Kinesin motor domain; it reads HVKVVVRIKP…LRFGERAKAM (333 aa). Position 175 to 182 (175 to 182) interacts with ATP; it reads GQNGSGKT. Coiled coils occupy residues 761–791, 872–942, and 1038–1081; these read QQEL…QTED, ARSF…LRRA, and EVLV…HKLE. The interval 1092-1114 is disordered; the sequence is NTLPESALQPLHQRNSAIEEEGM.

This sequence belongs to the TRAFAC class myosin-kinesin ATPase superfamily. Kinesin family. KIN-12 subfamily.

This Arabidopsis thaliana (Mouse-ear cress) protein is Kinesin-like protein KIN-12F.